A 320-amino-acid polypeptide reads, in one-letter code: Probable L-ascorbate peroxidase 5, chloroplastic (320 aa).

The transit peptide at 1–42 (MAVVHRILRRGLSAASPLPSLRGLLLVSPQELGRRPASSSSS) directs the protein to the chloroplast. Catalysis depends on His80, which acts as the Proton acceptor. A heme b-binding site is contributed by His209. Thr210 serves as a coordination point for K(+). Residues 213 to 241 (RARPERSGWGKPETKYTENGPGAPGGQSW) are disordered. The segment covering 214 to 228 (ARPERSGWGKPETKY) has biased composition (basic and acidic residues). 2 residues coordinate K(+): Thr242 and Asp249.

It belongs to the peroxidase family. Ascorbate peroxidase subfamily. The cofactor is heme b. Expressed in leaves, stems and flowers.

It localises to the plastid. Its subcellular location is the chloroplast stroma. The catalysed reaction is L-ascorbate + H2O2 = L-dehydroascorbate + 2 H2O. In terms of biological role, plays a key role in hydrogen peroxide removal. The sequence is that of Probable L-ascorbate peroxidase 5, chloroplastic from Oryza sativa subsp. japonica (Rice).